A 413-amino-acid chain; its full sequence is Precorrin-6Y C(5,15)-methyltransferase [decarboxylating] (413 aa).

It belongs to the precorrin methyltransferase family.

The enzyme catalyses precorrin-6B + 2 S-adenosyl-L-methionine = precorrin-8X + 2 S-adenosyl-L-homocysteine + CO2 + 3 H(+). It functions in the pathway cofactor biosynthesis; adenosylcobalamin biosynthesis; cob(II)yrinate a,c-diamide from precorrin-2 (aerobic route): step 7/10. Catalyzes the methylation of both C-5 and C-15 in precorrin-6Y to form precorrin-8X. This Sinorhizobium sp protein is Precorrin-6Y C(5,15)-methyltransferase [decarboxylating] (cobL).